The sequence spans 583 residues: Phosphoglucomutase, cytoplasmic 1 (583 aa).

The alpha-D-glucose 1,6-bisphosphate site is built by Arg-25 and Ser-124. Catalysis depends on Ser-124, which acts as the Phosphoserine intermediate. Mg(2+) contacts are provided by Ser-124, Asp-300, Asp-302, and Asp-304. At Ser-124 the chain carries Phosphoserine. Positions 304, 305, 368, 387, 389, and 400 each coordinate alpha-D-glucose 1,6-bisphosphate.

The protein belongs to the phosphohexose mutase family. In terms of assembly, monomer. The cofactor is Mg(2+). In terms of processing, autophosphorylated. As to expression, mostly expressed in roots and coleoptiles, and, to a lower extent, in leaves, pollen and developing seeds.

The protein resides in the cytoplasm. It carries out the reaction alpha-D-glucose 1-phosphate = alpha-D-glucose 6-phosphate. The catalysed reaction is O-phospho-L-seryl-[protein] + alpha-D-glucose 1-phosphate = alpha-D-glucose 1,6-bisphosphate + L-seryl-[protein]. The enzyme catalyses alpha-D-glucose 1,6-bisphosphate + L-seryl-[protein] = O-phospho-L-seryl-[protein] + alpha-D-glucose 6-phosphate. Catalyzes the reversible isomerization of alpha-D-glucose 1-phosphate to alpha-D-glucose 6-phosphate. The mechanism proceeds via the intermediate compound alpha-D-glucose 1,6-bisphosphate. This enzyme participates in both the breakdown and synthesis of glucose. The sequence is that of Phosphoglucomutase, cytoplasmic 1 from Zea mays (Maize).